Here is a 350-residue protein sequence, read N- to C-terminus: ADP-ribose pyrophosphatase, mitochondrial (350 aa).

Residues 1-46 constitute a mitochondrion transit peptide; the sequence is MAGRSLGKAVATVSLSVALASVTVRSSGCRAIPAPRNPFPSCGFHL. Disordered regions lie at residues 53 to 77 and 116 to 153; these read GSNG…KVER and SESS…PAGR. Ser121 is modified (phosphoserine). Residues 124–135 are compositionally biased toward basic and acidic residues; it reads FNEKDGHVERKS. One can recognise a Nudix hydrolase domain in the interval 178–334; it reads WKRDESGNKI…SQFIKLVAEK (157 aa). The Nudix box signature appears at 215–237; sequence GMVDPGEKISATLKREFGEEALN.

It belongs to the Nudix hydrolase family. NudF subfamily. As to quaternary structure, monomer. Interacts with GLOD4. It depends on Mg(2+) as a cofactor. Mn(2+) is required as a cofactor.

It localises to the mitochondrion. The catalysed reaction is ADP-D-ribose + H2O = D-ribose 5-phosphate + AMP + 2 H(+). In terms of biological role, hydrolyzes ADP-ribose (ADPR) to AMP and ribose 5'-phosphate. This Rattus norvegicus (Rat) protein is ADP-ribose pyrophosphatase, mitochondrial (Nudt9).